A 488-amino-acid polypeptide reads, in one-letter code: MADVRKLKNYIDGEWVESKTDKYEDVINPATGEVLCQVPISTRAELDQAAVIAEQAFEKWSQVAVPRRARVLFSFQQLLIQHKEELARLITLENGKNLSEARGEVQRGIENVEFAAGAPTLMMGDSLASIATDVEAANYRYPVGVVGGIAPFNFPMMVPCWMFPMAIALGNSFILKPSERTPLLMEKLVELFSEAGLPKGVFNVVYGAHDVVNGILENEIIKAVSFVGSKPVGEYVYKTGSANLKRVQALTGAKNHTIVLNDADLEDTVTNVISAAFGSAGERCMACAVVTVEEDIADEFLEALRTAAKNVKIGNGLDDGVFLGPVIREENQKRTIAYIEKGVEEGAKLTVDGRETGLSEGHFVGPTILEDVTTDMTIWKDEIFAPVLSVIRVKNLQEAVRVANLSEFANGACIFTNNAKAIRYFREKIDAGMLGVNLGVPAPMAFFPFSGWKSSFYGTLHANGKDSVDFYTHKKVVTARYSLKGYEE.

NAD(+) contacts are provided by Ala-150, Phe-152, Lys-176, Glu-179, Arg-180, Ser-229, and Thr-251. The active-site Nucleophile is Cys-284. Glu-382 provides a ligand contact to NAD(+).

It belongs to the aldehyde dehydrogenase family. IolA subfamily. Homotetramer.

It carries out the reaction 3-oxopropanoate + NAD(+) + CoA + H2O = hydrogencarbonate + acetyl-CoA + NADH + H(+). The catalysed reaction is 2-methyl-3-oxopropanoate + NAD(+) + CoA + H2O = propanoyl-CoA + hydrogencarbonate + NADH + H(+). It participates in polyol metabolism; myo-inositol degradation into acetyl-CoA; acetyl-CoA from myo-inositol: step 7/7. Its function is as follows. Catalyzes the oxidation of malonate semialdehyde (MSA) and methylmalonate semialdehyde (MMSA) into acetyl-CoA and propanoyl-CoA, respectively. Is involved in a myo-inositol catabolic pathway. Bicarbonate, and not CO2, is the end-product of the enzymatic reaction. This is Malonate-semialdehyde dehydrogenase from Listeria monocytogenes serotype 4a (strain HCC23).